Consider the following 177-residue polypeptide: ATP synthase subunit delta (177 aa).

The protein belongs to the ATPase delta chain family. In terms of assembly, F-type ATPases have 2 components, F(1) - the catalytic core - and F(0) - the membrane proton channel. F(1) has five subunits: alpha(3), beta(3), gamma(1), delta(1), epsilon(1). F(0) has three main subunits: a(1), b(2) and c(10-14). The alpha and beta chains form an alternating ring which encloses part of the gamma chain. F(1) is attached to F(0) by a central stalk formed by the gamma and epsilon chains, while a peripheral stalk is formed by the delta and b chains.

Its subcellular location is the cell inner membrane. In terms of biological role, f(1)F(0) ATP synthase produces ATP from ADP in the presence of a proton or sodium gradient. F-type ATPases consist of two structural domains, F(1) containing the extramembraneous catalytic core and F(0) containing the membrane proton channel, linked together by a central stalk and a peripheral stalk. During catalysis, ATP synthesis in the catalytic domain of F(1) is coupled via a rotary mechanism of the central stalk subunits to proton translocation. This protein is part of the stalk that links CF(0) to CF(1). It either transmits conformational changes from CF(0) to CF(1) or is implicated in proton conduction. In Neisseria gonorrhoeae (strain ATCC 700825 / FA 1090), this protein is ATP synthase subunit delta.